A 169-amino-acid polypeptide reads, in one-letter code: Putative cysteine protease YraA (169 aa).

The region spanning 3 to 169 (KKIAVLVTDQ…FNRESLNLLK (167 aa)) is the PfpI endopeptidase domain. The Nucleophile role is filled by C103. H104 is an active-site residue.

The protein belongs to the peptidase C56 family.

Functions in the protection against aldehyde-stress, possibly by degrading damaged proteins. The sequence is that of Putative cysteine protease YraA (yraA) from Bacillus subtilis (strain 168).